The sequence spans 238 residues: tRNA (guanine-N(7)-)-methyltransferase (238 aa).

Positions 68, 93, 120, and 143 each coordinate S-adenosyl-L-methionine. Residue aspartate 143 is part of the active site. Substrate is bound by residues lysine 147, aspartate 179, and 216–219 (TKFE).

The protein belongs to the class I-like SAM-binding methyltransferase superfamily. TrmB family.

The enzyme catalyses guanosine(46) in tRNA + S-adenosyl-L-methionine = N(7)-methylguanosine(46) in tRNA + S-adenosyl-L-homocysteine. The protein operates within tRNA modification; N(7)-methylguanine-tRNA biosynthesis. Its function is as follows. Catalyzes the formation of N(7)-methylguanine at position 46 (m7G46) in tRNA. The sequence is that of tRNA (guanine-N(7)-)-methyltransferase from Marinobacter nauticus (strain ATCC 700491 / DSM 11845 / VT8) (Marinobacter aquaeolei).